A 1480-amino-acid polypeptide reads, in one-letter code: MLLQDVHHREQLDDDVENAFSKINGTARQASPFADEPSIDVPSTHLPVVTPRSKTANDRTGLAKSLPYASLGASRSTIDEQDVLIQTWAILLHQYAVSDTVAFAIIGKSDPSGYSGRRASTQVVCLPHLFLDSARATPHAPAVHGWDGRLTYAELDQLSNSVARQLLRRGVRKGQFVPFSFEKSIWMVVAIIGILRAGGVVASIDPSQPQSRAREIIQETGATVIVASTAQASVFAGLVDTVVPIADDTVHPAANDTGLHPSLPPVHPEDPAVVIFTSGSTGKPKGIVIQHGAVTTRMVAEGRAFQYHGARTLQFAASTWDIFMTDIFTTLAFNGCVCIPSEEDRRFNLARFCAEYDVSLALITPSLANLLEPTGFPTLKTLIFGGEALKEEVTRKWEAVDGISLHQGYGPAETGPCVAGRLAERPEILGYALDNSVCVLVDPSNPNRLVPLGAVGELVVGGPSLLREYINDPRKTEAAVIENPPWALDLMTPVRRFYRTGDLLRYSVDTLDGRLEFVGRTDDQVKYHGQRIELGEIEHHLSRLPGVEACVVVLAKAGFFKDRLVAVVQAGKSSGGSSYGTQLSLRSDPNITITHMRRFLSSRLPEFMIPNELLVVQELPHNNSMKLDRGRVAKWVADMQSQPSEAVPKPHTRGNELLAHESTARTIAREYARIVAGDSVARRREYEDRDFNLQEGGIDSIQIMSLSMFLTEHFGFQVPMADILSSRATVRSIASLIDANSSPGRGQPLNTQETARLPLRSNGPAPSQQALERNGSRVFLTGASGFLGIEILRQLLARPKTHVYALVRGSSESQARERLVQKAISAGWWQDAYRTRLHVWHGDLTQPQLGLSQLQWQMLQGKASPSIDAIIHNGAKVHYSQDYETLKKTNVSPTVELLKAVHDREEPLHSFVFVSGGQQLSFDDREDEKNAAKSLKGSGYARSKAVSEQIVRRFANQKGSKARHVRIVKPGFIIGDAERGLANQSDFIWRLIAACVELGFYNGDEADSWLFISDITRVAQVILHSVFEDDSQPVTKVLDGLRFKTLWALLQDKFGFELQPLSRREWLARLKHSVATKKEKHVLLREQFPALHHGVVPFNNAAGTVVHREAAESTHRYMTSFPYELGRDDPASAAKTQRLQDRFAELAAFMNADPDEIAFGQSTTFLLRSLGQALKPLLNSDCEIIVSILCHEGSAAAWVALAKDLGIAIKWWAPPPGDDPVLSLDTLRPLLTPKTRLVACNHVSNVVGTIHPIRQVADLVHRIPGAVLVVDGVAWAPHRPIDVKALDVDFYCFSWYKVFGPHVAQLYGRRSAQKRALAGISHFFLSEMPGLDWRLRLGANSFELEEALVPITRYLKRVGWDNIIAQETVLQDVFLAYLRRRPRVFRIFGEQSSDPAKRVPVITFEVIGHSSTVVANKVNQRGRFRVVSGNCWAPRPTHDVLGLGADGLIRVSFVHYNTVAEVQEFCTELDSVLETLNAGI.

A disordered region spans residues 31 to 59 (SPFADEPSIDVPSTHLPVVTPRSKTANDR). The interval 132–527 (DSARATPHAP…VGRTDDQVKY (396 aa)) is adenylation domain. A Carrier domain is found at 662–741 (STARTIAREY…SIASLIDANS (80 aa)). Ser-700 carries the O-(pantetheine 4'-phosphoryl)serine modification. The segment covering 739-754 (ANSSPGRGQPLNTQET) has biased composition (polar residues). A disordered region spans residues 739–773 (ANSSPGRGQPLNTQETARLPLRSNGPAPSQQALER). The tract at residues 780 to 1003 (LTGASGFLGI…ACVELGFYNG (224 aa)) is NAD-binding domain. Positions 1100–1465 (NAAGTVVHRE…YNTVAEVQEF (366 aa)) are aminotransferase domain.

The protein belongs to the NRP synthetase family.

It functions in the pathway secondary metabolite biosynthesis. In terms of biological role, nonribosomal peptide synthetase-like enzyme; part of the gene cluster that mediates the biosynthesis of the isoquinoline alkaloids fumisoquin A, fumisoquin B and fumisoquin C; as well as small amounts of fumipyrrole as a shunt metabolite. The products of the cluster lead to a brown coloration and are important for growth and conidiation. The nonribosomal peptide synthetase-like protein fsqF, which lacks a canonical condensation domain, is required for addition of a serine-derived dehydroalanine moiety to activated tyrosine but is not essential for the subsequent steps leading to isoquinoline formation. A different enzyme, most likely the ATP-grasp enzyme fsqD, is responsible for activation of tyrosine. Three additional enzymes encoded by the fsq cluster, the N-methyltransferase fsqC, the phenol 2-monooxygenase fsqG and the FAD-dependent oxidase fsqB, catalyze the formation of the isoquinoline ring system in the fumisoquins. FsqB converts the fspF thiolation domain-bound (2S,4S,5S)-2-amino-6-(3,4-dihydroxyphenyl)-4-hydroxy-5-(methylamino)hexanoyl into isoquinoline. The cyclization most likely proceeds via a two-step mechanism, beginning with FAD-dependent oxidation of the methyl group to an iminium species followed by electrophilic attack on the deprotonated phenol. The sequence is that of Nonribosomal peptide synthetase-like enzyme fsqF from Aspergillus fumigatus (strain ATCC MYA-4609 / CBS 101355 / FGSC A1100 / Af293) (Neosartorya fumigata).